The chain runs to 397 residues: Aromatic-amino-acid aminotransferase (397 aa).

Substrate contacts are provided by Gly-34, Tyr-66, Trp-131, and Asn-184. N6-(pyridoxal phosphate)lysine is present on Lys-247. Residues Arg-281 and Arg-375 each contribute to the substrate site.

This sequence belongs to the class-I pyridoxal-phosphate-dependent aminotransferase family. In terms of assembly, homodimer. The cofactor is pyridoxal 5'-phosphate.

The protein localises to the cytoplasm. The enzyme catalyses an aromatic L-alpha-amino acid + 2-oxoglutarate = an aromatic oxo-acid + L-glutamate. It carries out the reaction (3S)-3-methyl-L-phenylalanine + 2-oxoglutarate = (3S)-2-oxo-3-phenylbutanoate + L-glutamate. Its pathway is amino-acid biosynthesis; L-phenylalanine biosynthesis; L-phenylalanine from phenylpyruvate (ArAT route): step 1/1. It functions in the pathway amino-acid biosynthesis; L-tyrosine biosynthesis; L-tyrosine from (4-hydroxyphenyl)pyruvate: step 1/1. Its function is as follows. Broad-specificity enzyme that catalyzes the transamination of 2-ketoisocaproate, p-hydroxyphenylpyruvate, and phenylpyruvate to yield leucine, tyrosine, and phenylalanine, respectively. In vitro, is able to catalyze the conversion of beta-methyl phenylpyruvate to the nonproteinogenic amino acid (2S,3S)-beta-methyl-phenylalanine, a building block of the antibiotic mannopeptimycin produced by Streptomyces hygroscopicus NRRL3085. The chain is Aromatic-amino-acid aminotransferase (tyrB) from Escherichia coli (strain K12).